We begin with the raw amino-acid sequence, 181 residues long: ATP-dependent protease subunit HslV (181 aa).

Threonine 9 is an active-site residue. Residues alanine 166, cysteine 169, and threonine 172 each contribute to the Na(+) site.

This sequence belongs to the peptidase T1B family. HslV subfamily. In terms of assembly, a double ring-shaped homohexamer of HslV is capped on each side by a ring-shaped HslU homohexamer. The assembly of the HslU/HslV complex is dependent on binding of ATP.

The protein resides in the cytoplasm. It carries out the reaction ATP-dependent cleavage of peptide bonds with broad specificity.. With respect to regulation, allosterically activated by HslU binding. In terms of biological role, protease subunit of a proteasome-like degradation complex believed to be a general protein degrading machinery. This is ATP-dependent protease subunit HslV from Staphylococcus aureus (strain JH1).